A 1202-amino-acid chain; its full sequence is MVGHLVKYGKHRTRRSYASIKEVLDVPNLIEIQTASYQWFLNDGIKEMFGDIMPIDDFQGTLSLEYVDYQLMEPKYNIDEAREHDANYSAPLHVTLRLTNHETGEIKSQDVFFGDFPLMTEQGTFIINGAERVIVSQLVRSPGIYYNQTTDKNGRPHFGTTVIPNRGAWLEYETDAKGIANVRIDRTRKLLMTELVRALGFGSDSDIIDIFSDQYDALNMTLEKDVHKDMSDSRVEEALKDVYERLRPGEPKTADSSRALLVARFFDPKRYDLASVGRYKINKKLSLKTRLLNQTLAETLADPDSGEIIAEKGTLVDKEVISKLTPYLDREDFKTTTYTPSGDAVLEEPVTLQKIKIESPENPEKTLLLIGNGHIDEDDRTVRPADILAGMNYFLNLQEGVGHVDDIDHLGNRRIRSVGELLQNQFRIGLTRMERVVRERMSIQDANTVTPQQLINIRPVVAAVKEFFGSSQLSQFMDQTNPLGEMNHKRRLSALGPGGLTRDRAGVEVRDVHYTHYGRIDPIETPEGPNIGLINSLATYGRINKYGFVETPYRRVDWTTHKVTDKIDYLTADEEDNYIVAQANSPLNEDGSFVHNTVMARFGEENIETPIDRIDYMDVSPKQVVSVGTAAIPFLENDDSNRALMGANMQRQAVPLLDPHSPLVGTGIEYKAAHDSGVAMIARASGEVEYVDGRQIRVRREDGQLDTYELMKFRRSNGGKNYNQKPIVHVGEHIEADEVLADGPSMEQGELALGQNPLIAFMTWQGYNFEDAIVLNERLVREDVYTSIHIEEYDSEARDTKLGPEEMTREIPNTGEDQLKDLDADGIIRVGAEVHDGDILVGKVTPKGVTELSAEERLLHAIFGEKAREVRDTSLRVPHGGGGVVQNVRIYTPENGDELAPGVNMMVRVYIAQKRKIQVGDKMAGRHGNKGTVSVVVPEEDMPYMPDGTPIDILLSPMGVPSRMNIGQVLELHLGFAAKKLGIHVASPVFDGASDDEIEMALREAGLPQDGKSVVYDGRTGEAFDKRVGVGVMHYMKLAHMVDDKIHARSIGPYSLVTQQPLGGKAQFGGQRFGEMEVWALEAYGAAYTLQEILTYKSDDVAGRVKVYESIIKGEPIPRPGVPESFRVLVKELQALGLDMQVLDGAGDEVELRQMDEDDSILPVDALEKLARTNPDLLNKDDEEVAAAFSKVEEQSQTFEEK.

The protein belongs to the RNA polymerase beta chain family. The RNAP catalytic core consists of 2 alpha, 1 beta, 1 beta' and 1 omega subunit. When a sigma factor is associated with the core the holoenzyme is formed, which can initiate transcription.

It carries out the reaction RNA(n) + a ribonucleoside 5'-triphosphate = RNA(n+1) + diphosphate. Its function is as follows. DNA-dependent RNA polymerase catalyzes the transcription of DNA into RNA using the four ribonucleoside triphosphates as substrates. The sequence is that of DNA-directed RNA polymerase subunit beta from Leuconostoc mesenteroides subsp. mesenteroides (strain ATCC 8293 / DSM 20343 / BCRC 11652 / CCM 1803 / JCM 6124 / NCDO 523 / NBRC 100496 / NCIMB 8023 / NCTC 12954 / NRRL B-1118 / 37Y).